Reading from the N-terminus, the 270-residue chain is Glutamate racemase (270 aa).

Substrate contacts are provided by residues Asp10–Ser11 and Tyr42–Gly43. Cys74 acts as the Proton donor/acceptor in catalysis. Residue Asn75–Thr76 participates in substrate binding. The active-site Proton donor/acceptor is Cys189. Residue Thr190–His191 coordinates substrate.

The protein belongs to the aspartate/glutamate racemases family.

It catalyses the reaction L-glutamate = D-glutamate. It functions in the pathway cell wall biogenesis; peptidoglycan biosynthesis. In terms of biological role, provides the (R)-glutamate required for cell wall biosynthesis. The sequence is that of Glutamate racemase from Bartonella quintana (strain Toulouse) (Rochalimaea quintana).